The sequence spans 268 residues: Glutamate racemase (268 aa).

Substrate contacts are provided by residues 13 to 14 (DS) and 45 to 46 (YG). C77 serves as the catalytic Proton donor/acceptor. 78 to 79 (NT) is a substrate binding site. Catalysis depends on C185, which acts as the Proton donor/acceptor. 186–187 (TH) is a substrate binding site.

This sequence belongs to the aspartate/glutamate racemases family.

The catalysed reaction is L-glutamate = D-glutamate. It functions in the pathway cell wall biogenesis; peptidoglycan biosynthesis. Provides the (R)-glutamate required for cell wall biosynthesis. This is Glutamate racemase from Vibrio campbellii (strain ATCC BAA-1116).